The primary structure comprises 267 residues: 2-keto-3-deoxy-L-rhamnonate aldolase (267 aa).

The Proton acceptor role is filled by His-49. Gln-151 is a binding site for substrate. Glu-153 is a Mg(2+) binding site. The substrate site is built by Ala-178 and Asp-179. Residue Asp-179 participates in Mg(2+) binding.

This sequence belongs to the HpcH/HpaI aldolase family. KDR aldolase subfamily. In terms of assembly, homohexamer. Mg(2+) serves as cofactor.

The catalysed reaction is 2-dehydro-3-deoxy-L-rhamnonate = (S)-lactaldehyde + pyruvate. Its function is as follows. Catalyzes the reversible retro-aldol cleavage of 2-keto-3-deoxy-L-rhamnonate (KDR) to pyruvate and lactaldehyde. In Salmonella dublin (strain CT_02021853), this protein is 2-keto-3-deoxy-L-rhamnonate aldolase.